Consider the following 208-residue polypeptide: Pectinesterase inhibitor 6 (208 aa).

The first 30 residues, 1–30 (MTSSSSSPITFTLLLLLSLLVALNPNPSLA), serve as a signal peptide directing secretion. Cysteine 53 and cysteine 62 are joined by a disulfide. N-linked (GlcNAc...) asparagine glycosylation is found at asparagine 54 and asparagine 75. Cysteine 118 and cysteine 165 are disulfide-bonded.

This sequence belongs to the PMEI family.

It is found in the secreted. Its subcellular location is the extracellular space. The protein localises to the apoplast. Its function is as follows. Pectin methylesterase (PME) inhibitor that targets PME from seeds and modulates PME activity and pectin methylesterification during seed germination. Promotes mucilage release by limiting methylesterification of homogalacturonan in seed coat epidermal cells. The protein is Pectinesterase inhibitor 6 of Arabidopsis thaliana (Mouse-ear cress).